Consider the following 396-residue polypeptide: MAIRINTATFQSDLYRSFAFPQPKPLRSPKFAMASTIGSATTKVESTKKPFTPPREVHQQVLHSMPPQKIEIFKSMEGWAENNILVHLKPVEKCWQAQDFLPDPASDGFMEQVEELRARAKEIPDDYFVVLVGDMITEEALPTYQTMLNTLDGVRDETGATLLLGLVWTRAWTAEENRHGDLLHQYLYLSGRVDMRQIQKTIQYLIGSGMDPRTENSPYLGFIYTSFQERATFISHGNTARHAKEHGDVKLAQMCGIIAADEKRHETAYTKIVEKLFEIDPDGTVLAFADMMRKKISMPAHLMYDGRDDNLFENFSAVAQRLGVYTAKDYADILEFLVGRWKVADLTGLSGEGRKAQDYVCGLAPRIRRLEERNSARAKESVNVPFSWIFDREVKL.

Residues 1–33 (MAIRINTATFQSDLYRSFAFPQPKPLRSPKFAM) constitute a chloroplast transit peptide. Glutamate 138, glutamate 176, histidine 179, glutamate 229, glutamate 262, and histidine 265 together coordinate Fe cation.

It belongs to the fatty acid desaturase type 2 family. As to quaternary structure, homodimer. It depends on Fe(2+) as a cofactor.

The protein resides in the plastid. The protein localises to the chloroplast. It catalyses the reaction octadecanoyl-[ACP] + 2 reduced [2Fe-2S]-[ferredoxin] + O2 + 2 H(+) = (9Z)-octadecenoyl-[ACP] + 2 oxidized [2Fe-2S]-[ferredoxin] + 2 H2O. It participates in lipid metabolism; fatty acid metabolism. Its function is as follows. Converts stearoyl-ACP to oleoyl-ACP by introduction of a cis double bond between carbons 9 and 10 of the acyl chain. The sequence is that of Stearoyl-[acyl-carrier-protein] 9-desaturase, chloroplastic from Helianthus annuus (Common sunflower).